The chain runs to 198 residues: MTVAEMSASRSRSLRWFGVAAGLLLLQIVILYAMGRIPICECGYVKLFEPGVNTPGNSQHLADWYTPSHIIHGFLFYWFAWLLFRNKPFSMRLSFAVLIEAAWELLENSPIIIDRYRTATTALGYTGDSILNSAMDTVFMALGFLFAARVPVWLTVVIAIFFEIFTGWLIRDNLTLNVVMLVWPVDVIKEWQNALPQM.

3 consecutive transmembrane segments (helical) span residues 14–34 (LRWF…LYAM), 64–84 (WYTP…WLLF), and 150–170 (VPVW…GWLI).

This sequence belongs to the UPF0314 family.

It localises to the cell membrane. The polypeptide is UPF0314 protein Atu8092 (Agrobacterium fabrum (strain C58 / ATCC 33970) (Agrobacterium tumefaciens (strain C58))).